A 129-amino-acid polypeptide reads, in one-letter code: UPF0212 protein MA_1372 (129 aa).

The protein belongs to the UPF0212 family.

This is UPF0212 protein MA_1372 from Methanosarcina acetivorans (strain ATCC 35395 / DSM 2834 / JCM 12185 / C2A).